Here is a 174-residue protein sequence, read N- to C-terminus: Regenerating islet-derived protein 3-gamma (174 aa).

A signal peptide spans M1–G26. Positions E27–R37 are excised as a propeptide. Intrachain disulfides connect C40-C51, C68-C170, and C145-C162. The C-type lectin domain maps to Y47 to K171. Positions W103–G118 are sufficient to activate EXTL3. Position 107 (H107) interacts with Zn(2+). The EPN signature appears at E114–N116. Positions 121 and 144 each coordinate Zn(2+).

As to quaternary structure, forms a hexameric membrane-permeabilizing oligomeric pore on membrane phospholipids. The hexamer is formed by three dimers related by helical symmetry. Forms filaments, filamentation traps pore complexes and limits damage to host cells. Interacts with EXTL3. In terms of processing, proteolytic processing by trypsin removes an inhibitory N-terminal propeptide and is essential for peptidoglycan binding and antibacterial activity. In terms of tissue distribution, predominantly expressed in the small intestine, including Paneth cells (at protein level). Hardly detectable in the colon (at protein level). Highly expressed in the lung epithelium during methicillin-resistant S.aureus infection and allergic airway inflammation (at protein level). Skin injury increases its epidermal expression. Also expressed in the pancreas. Expressed by nocireceptors.

Its subcellular location is the secreted. The protein resides in the cytoplasm. With respect to regulation, lipopolysaccharide inhibits pore-forming activity, explaining why is bactericidal for Gram-positive but not Gram-negative bacteria. In terms of biological role, bactericidal C-type lectin which acts exclusively against Gram-positive bacteria and mediates bacterial killing by binding to surface-exposed carbohydrate moieties of peptidoglycan. Restricts bacterial colonization of the intestinal epithelial surface and consequently limits activation of adaptive immune responses by the microbiota. Its function is as follows. Acts as a hormone in response to different stimuli like anti-inflammatory signals, such as IL17A, or gut microbiome. Is secreted by different cell types to activate its receptor EXTL3 and induce cell specific signaling pathways. Induced by IL17A in keratinocytes, regulates keratinocyte proliferation and differentiation after skin injury. In parallel, inhibits skin inflammation through the inhibition of inflammatory cytokines such as IL6 and TNF. Induced by IL22 in lung epithelial cells, inhibits cytokine production and regulates allergic airway inflammation. Induced in small intestine by inulin-enriched diet and Lactobacillus gasseri enriched microbiome, plays a role in the improvement of gut barrier function, the regulation of energy balance and glucose levels. Modulates microbiota composition in duodenal contents. Produced by nociceptor in response to endotoxins, prevents endotoxic death by targeting kynurenine pathway in microglia. Functionally, has bacteriostatic activity. Has bactericidal activity against L.monocytogenes and methicillin-resistant S.aureus. This is Regenerating islet-derived protein 3-gamma from Mus musculus (Mouse).